A 401-amino-acid polypeptide reads, in one-letter code: Nicotinate phosphoribosyltransferase (401 aa).

H221 is modified (phosphohistidine; by autocatalysis).

This sequence belongs to the NAPRTase family. In terms of processing, transiently phosphorylated on a His residue during the reaction cycle. Phosphorylation strongly increases the affinity for substrates and increases the rate of nicotinate D-ribonucleotide production. Dephosphorylation regenerates the low-affinity form of the enzyme, leading to product release.

The catalysed reaction is nicotinate + 5-phospho-alpha-D-ribose 1-diphosphate + ATP + H2O = nicotinate beta-D-ribonucleotide + ADP + phosphate + diphosphate. It participates in cofactor biosynthesis; NAD(+) biosynthesis; nicotinate D-ribonucleotide from nicotinate: step 1/1. Its function is as follows. Catalyzes the synthesis of beta-nicotinate D-ribonucleotide from nicotinate and 5-phospho-D-ribose 1-phosphate at the expense of ATP. In Erwinia tasmaniensis (strain DSM 17950 / CFBP 7177 / CIP 109463 / NCPPB 4357 / Et1/99), this protein is Nicotinate phosphoribosyltransferase.